The chain runs to 203 residues: Ras-related protein Rab5A (203 aa).

18-26 (GDVGTGKSS) is a binding site for GTP. The Effector region signature appears at 40–48 (QESTIGAAF). Residues 66-70 (DTAGQ), 124-127 (NKAD), and 154-155 (SA) contribute to the GTP site. 2 S-geranylgeranyl cysteine lipidation sites follow: Cys-201 and Cys-202.

The protein belongs to the small GTPase superfamily. Rab family. As to quaternary structure, interacts with VPS9A. Interacts with NSF and RBP-L. Highly expressed in roots. Expressed at low levels in shoots, flowers and grains.

It is found in the prevacuolar compartment membrane. The protein localises to the golgi apparatus membrane. The protein resides in the cell membrane. Its subcellular location is the protein storage vacuole membrane. In terms of biological role, plays an important role in intracellular trafficking of seed storage proteins to the protein storage vacuoles (PSVs). Participates in the transport of the proglutelins from the Golgi apparatus to the PSVs in endosperm. Functions cooperatively with VPS9A to regulate post-Golgi dense vesicle-mediated transport of storage proteins to the type II protein bodies (PBII) protein storage vacuoles in developing endosperm. Involved in the maintenance of the general structural organization of the endomembrane system in developing endosperm. Binds GTP in vitro. Forms a quaternary complex with the two glutelin zipcode RNA-binding proteins RBP-L and RBP-P, and the membrane trafficking factor NSF. This quaternay complex carries glutelin mRNAs for active transport on endosomes to the cortical endoplasmic reticulum membrane, and enables endosome-mediated glutelin mRNA transport in endosperm cells. The chain is Ras-related protein Rab5A from Oryza sativa subsp. japonica (Rice).